The chain runs to 70 residues: Kunitz-type serine protease inhibitor BmKTT-3 (70 aa).

Residues 7-57 (CRLPPERGPCRGNITKYYYHNESRTCRTFSYGGCEGNSNNFRNRHYCMKYC) enclose the BPTI/Kunitz inhibitor domain. 3 cysteine pairs are disulfide-bonded: cysteine 7-cysteine 57, cysteine 16-cysteine 40, and cysteine 32-cysteine 53.

This sequence belongs to the venom Kunitz-type family. Scorpion delta-Ktx subfamily. Delta-Ktx 1 sub-subfamily. Expressed by the venom gland.

It localises to the secreted. In terms of biological role, serine protease inhibitor that inhibits 85% of the activity of trypsin at a molar ratio of 4:1 (Ki=760 nM). This chain is Kunitz-type serine protease inhibitor BmKTT-3, found in Olivierus martensii (Manchurian scorpion).